The primary structure comprises 507 residues: L-amino-acid oxidase (507 aa).

Residues 1 to 19 (MNVLFIFSLLFLAALESCA) form the signal peptide. Cys-29 and Cys-192 form a disulfide bridge. FAD-binding positions include 62–63 (MA), 82–83 (EA), Arg-90, and 106–109 (GPMR). A substrate-binding site is contributed by Arg-109. Asn-191 and Asn-213 each carry an N-linked (GlcNAc...) asparagine glycan. Val-280 serves as a coordination point for FAD. Cys-348 and Cys-429 are joined by a disulfide. Asn-378 carries N-linked (GlcNAc...) asparagine glycosylation. Substrate is bound at residue Tyr-389. Residues Glu-473 and 480 to 485 (GWIDST) contribute to the FAD site.

The protein belongs to the flavin monoamine oxidase family. FIG1 subfamily. Homodimer; non-covalently linked. It depends on FAD as a cofactor. As to expression, expressed by the venom gland.

Its subcellular location is the secreted. The enzyme catalyses an L-alpha-amino acid + O2 + H2O = a 2-oxocarboxylate + H2O2 + NH4(+). It catalyses the reaction L-leucine + O2 + H2O = 4-methyl-2-oxopentanoate + H2O2 + NH4(+). Functionally, catalyzes an oxidative deamination of predominantly hydrophobic and aromatic L-amino acids, thus producing hydrogen peroxide that may contribute to the diverse toxic effects of this enzyme. Shows activity on L-Leu. Exhibits diverse biological activities, such as hemorrhage, hemolysis, edema, apoptosis of vascular endothelial cells or tumor cell lines, antibacterial and antiparasitic activities. This protein induces platelet aggregation by both hydrogen peroxide production and binding to platelet membrane proteins (that would enhance the sensitivity of platelets to hydrogen peroxide). Effects of snake L-amino oxidases on platelets are controversial, since they either induce aggregation or inhibit agonist-induced aggregation. These different effects are probably due to different experimental conditions. This chain is L-amino-acid oxidase, found in Naja atra (Chinese cobra).